The sequence spans 707 residues: MSQYTEKEPSVMDQDSSKAAWPRAAGGYQTITGRRYGRRHAYVSFKPCMTRHERSLGRAGDDYEVLELDDVAKENTAGSSSLDQVHPSLPSETTVEKSETEIPTCGPALNQSTESNPSVATVCHSEEVRETLDSSTNLQNHAERECTPAVCNASSVQNGIVLVHTDSYDPDSKHDENDSLQLCAQAVEGGRRQKVLGNAVFELENGEVERYADLCPSVPSLSGEIREESEELGSALLEKNSAGDAEAVHQDGQEFQRSSEDGIVRKRRQDDTDQGRQTENSTEDADCVPGHVEQNTSERANHHGSSPEQVVRPKVRKVISSSQVDQESGFNRHEAKQRSVQRWREALEVEECSSDDPIIKCDDYDGDHDCMFLTPSYSRVTPREAERHRATAENGATASGRQEARENAFWNACGEYYQLFDKDEDSSECSDGEWSASLPHRFSGTEKDQSSSDESWETLPGKDENEPELQSDSSGPEEENQELSLQEGEQTSLEEGEIPWLQYNEVNESSSDEGNEPANEFAQPEAFMLDGNNNLEDDSSVSEDLDVDWSLFDGFADGLGVAEAISYVDPQFLTYMALEERLAQAMETALAHLESLAVDVEVANPPASKESIDGLPETLVLEDHTAIGQEQCCPICCSEYIKDDIATELPCHHFFHKPCVSIWLQKSGTCPVCRRHFPPAVIDASAAASSEPDLDASPANDNAEEAP.

Positions 1–10 (MSQYTEKEPS) are enriched in basic and acidic residues. 3 disordered regions span residues 1–23 (MSQYTEKEPSVMDQDSSKAAWPR), 75–120 (NTAG…PSVA), and 242–290 (AGDA…CVPG). S2 carries the N-acetylserine modification. Over residues 109–119 (LNQSTESNPSV) the composition is skewed to polar residues. Over residues 246-276 (EAVHQDGQEFQRSSEDGIVRKRRQDDTDQGR) the composition is skewed to basic and acidic residues. Phosphoserine is present on residues S306 and S320. S339 bears the Phosphoserine; by PKA mark. Disordered stretches follow at residues 380-403 (VTPREAERHRATAENGATASGRQE) and 424-493 (EDSS…QTSL). Residues 381–391 (TPREAERHRAT) are compositionally biased toward basic and acidic residues. Position 430 is a phosphoserine (S430). Residues 465–481 (NEPELQSDSSGPEEENQ) are compositionally biased toward acidic residues. Polar residues predominate over residues 482–491 (ELSLQEGEQT). Residues 530-707 (DGNNNLEDDS…PANDNAEEAP (178 aa)) are interaction with PRKAR1A, PRKAR2A and PRKAR2B. The interval 549-569 (WSLFDGFADGLGVAEAISYVD) is mediates interaction with TBC1D31. Residues 633-674 (CPICCSEYIKDDIATELPCHHFFHKPCVSIWLQKSGTCPVCR) form an RING-type; atypical zinc finger. The segment at 686 to 707 (AAASSEPDLDASPANDNAEEAP) is disordered.

Binds ubiquitin-conjugating enzymes (E2s). In vitro, interacts with the ubiquitin-conjugating enzyme, UBE2D2. The phosphorylated form interacts with PRKAR1A, PRKAR2A and PRKAR2B. Binds the catalytic subunits of cAMP-dependent protein kinase. Interacts with MFHAS1. Interacts with TBC1D31; the interaction is direct and recruits PJA2 to centrosomes. As to expression, highly expressed in the brain, in nerve cells but not in glial cells. Abundantly expressed in pyramidal neurons and in the CA3 region of apical dendrites. Colocalizes with PRKAR2B in dentate granule cells and at postsynaptic sites of primary hippocampal neurons.

The protein localises to the cytoplasm. Its subcellular location is the cell membrane. It localises to the endoplasmic reticulum membrane. The protein resides in the golgi apparatus membrane. It is found in the synapse. The protein localises to the postsynaptic density. Its subcellular location is the cytoskeleton. It localises to the microtubule organizing center. The protein resides in the centrosome. The catalysed reaction is S-ubiquitinyl-[E2 ubiquitin-conjugating enzyme]-L-cysteine + [acceptor protein]-L-lysine = [E2 ubiquitin-conjugating enzyme]-L-cysteine + N(6)-ubiquitinyl-[acceptor protein]-L-lysine.. The protein operates within protein modification; protein ubiquitination. In terms of biological role, has E2-dependent E3 ubiquitin-protein ligase activity. Responsible for ubiquitination of cAMP-dependent protein kinase type I and type II-alpha/beta regulatory subunits and for targeting them for proteasomal degradation. Essential for PKA-mediated long-term memory processes. Through the ubiquitination of MFHAS1, positively regulates the TLR2 signaling pathway that leads to the activation of the downstream p38 and JNK MAP kinases and promotes the polarization of macrophages toward the pro-inflammatory M1 phenotype. Plays a role in ciliogenesis by ubiquitinating OFD1. This is E3 ubiquitin-protein ligase Praja-2 (Pja2) from Rattus norvegicus (Rat).